A 226-amino-acid chain; its full sequence is Ribonuclease 3 (226 aa).

An RNase III domain is found at 6–128 (MKKLQKFIGY…IIASIFLDSN (123 aa)). Position 41 (glutamate 41) interacts with Mg(2+). The active site involves aspartate 45. Mg(2+) is bound by residues asparagine 114 and glutamate 117. The active site involves glutamate 117. A DRBM domain is found at 155-225 (DPKTRLQEYL…AQNALIRLEV (71 aa)).

The protein belongs to the ribonuclease III family. As to quaternary structure, homodimer. It depends on Mg(2+) as a cofactor.

It is found in the cytoplasm. The catalysed reaction is Endonucleolytic cleavage to 5'-phosphomonoester.. Digests double-stranded RNA. Involved in the processing of primary rRNA transcript to yield the immediate precursors to the large and small rRNAs (23S and 16S). Processes some mRNAs, and tRNAs when they are encoded in the rRNA operon. Processes pre-crRNA and tracrRNA of type II CRISPR loci if present in the organism. The chain is Ribonuclease 3 from Buchnera aphidicola subsp. Cinara cedri (strain Cc).